We begin with the raw amino-acid sequence, 477 residues long: Glycogen synthase (477 aa).

Lys15 contacts ADP-alpha-D-glucose.

The protein belongs to the glycosyltransferase 1 family. Bacterial/plant glycogen synthase subfamily.

It catalyses the reaction [(1-&gt;4)-alpha-D-glucosyl](n) + ADP-alpha-D-glucose = [(1-&gt;4)-alpha-D-glucosyl](n+1) + ADP + H(+). It functions in the pathway glycan biosynthesis; glycogen biosynthesis. Synthesizes alpha-1,4-glucan chains using ADP-glucose. The polypeptide is Glycogen synthase (Klebsiella pneumoniae (strain 342)).